A 245-amino-acid polypeptide reads, in one-letter code: 1-(5-phosphoribosyl)-5-[(5-phosphoribosylamino)methylideneamino] imidazole-4-carboxamide isomerase (245 aa).

The active-site Proton acceptor is D7. The Proton donor role is filled by D129.

Belongs to the HisA/HisF family.

Its subcellular location is the cytoplasm. The catalysed reaction is 1-(5-phospho-beta-D-ribosyl)-5-[(5-phospho-beta-D-ribosylamino)methylideneamino]imidazole-4-carboxamide = 5-[(5-phospho-1-deoxy-D-ribulos-1-ylimino)methylamino]-1-(5-phospho-beta-D-ribosyl)imidazole-4-carboxamide. Its pathway is amino-acid biosynthesis; L-histidine biosynthesis; L-histidine from 5-phospho-alpha-D-ribose 1-diphosphate: step 4/9. This is 1-(5-phosphoribosyl)-5-[(5-phosphoribosylamino)methylideneamino] imidazole-4-carboxamide isomerase from Pectobacterium carotovorum subsp. carotovorum (strain PC1).